The chain runs to 190 residues: CASP-like protein 5A3 (190 aa).

Composition is skewed to low complexity over residues 1-12 (MRASRPAVHPVE) and 20-31 (AAAEGPEAQVEG). The disordered stretch occupies residues 1–31 (MRASRPAVHPVEAAPPPPAAAAEGPEAQVEG). The Cytoplasmic segment spans residues 1 to 50 (MRASRPAVHPVEAAPPPPAAAAEGPEAQVEGAAHPRGVRMKDPPGAPGTP). The helical transmembrane segment at 51 to 71 (AGLGLRLAQAFFAAAALAVMA) threads the bilayer. At 72-81 (STNDFPSVSA) the chain is on the extracellular side. The helical transmembrane segment at 82–102 (FSYLVAAAILQCLWSLLLAFV) threads the bilayer. Over 103–126 (DIYALLVKRSLRNARAVCIFTIGD) the chain is Cytoplasmic. Residues 127 to 147 (GITGTITLGAACASAGITVLI) form a helical membrane-spanning segment. The Extracellular segment spans residues 148 to 164 (GNDLNICAENHCASFET). The helical transmembrane segment at 165–185 (ATALAFISWFALAPSCILNFW) threads the bilayer. Residues 186–190 (SMASR) are Cytoplasmic-facing.

The protein belongs to the Casparian strip membrane proteins (CASP) family. Homodimer and heterodimers.

It localises to the cell membrane. This chain is CASP-like protein 5A3, found in Zea mays (Maize).